A 411-amino-acid polypeptide reads, in one-letter code: LIM domain-binding protein 1 (411 aa).

Ser-2 carries the N-acetylserine modification. Position 61 is a phosphothreonine (Thr-61). Phosphoserine is present on residues Ser-265 and Ser-302. 2 disordered regions span residues 283–330 (APPA…TFAL) and 367–411 (DAAN…QASQ). The segment covering 302–318 (SGGSTMSSGGGNTNNSN) has biased composition (low complexity). The LIM interaction domain (LID) domain occupies 336–375 (DVMVVGEPTLMGGEFGDEDERLITRLENTQFDAANGIDDE).

It belongs to the LDB family. In terms of assembly, interacts with ESR1. Forms homodimers and heterodimers. Interacts with and activates LHX1/LIM1. Interacts with the LIM domains of ISL1 and LMO2. Can assemble in a complex with LMO2 and TAL1/SCL but does not interact with TAL1/SCL directly. Strongly interacts with the LIM2 domain of LMX1A and more weakly with the LIM1 domain. Homodimerization is not required for, and does not effect, LMX1A-binding. Component of a nuclear TAL-1 complex composed at least of CBFA2T3, LDB1, TAL1 and TCF3. Interacts with LHX6 and LHX9. At neuronal promoters, forms a complex with LHX3 involved in the specification of interneurons, in motor neurons, it is displaced by ISL1 to form a ternary complex in which ISL1 contacts both LHX3 and LDB1. Interacts with SLK; leading to negatively regulate SLK kinase activity. Interacts with YWHAZ. Interacts with PRDM1/BLIMP1. Interacts with LMO4. Interacts with RLIM/RNF12; the interaction inhibits the ubiquitination of LMO proteins. Ubiquitinated by RLIM/RNF12, leading to its degradation by the proteasome. As to expression, expressed in a wide range of adult tissues including brain, heart, skeletal muscle, colon, thymus, spleen, kidney, liver, small intestine, lung and peripheral blood leukocytes.

The protein localises to the nucleus. In terms of biological role, binds to the LIM domain of a wide variety of LIM domain-containing transcription factors. May regulate the transcriptional activity of LIM-containing proteins by determining specific partner interactions. Plays a role in the development of interneurons and motor neurons in cooperation with LHX3 and ISL1. Acts synergistically with LHX1/LIM1 in axis formation and activation of gene expression. Acts with LMO2 in the regulation of red blood cell development, maintaining erythroid precursors in an immature state. The chain is LIM domain-binding protein 1 (LDB1) from Homo sapiens (Human).